Here is a 391-residue protein sequence, read N- to C-terminus: Terminal nucleotidyltransferase 5C (391 aa).

It belongs to the TENT family. As to quaternary structure, interacts with BCCIP and PABPC1; the interaction has no effect on TENT5C poly(A) polymerase function. Interacts with PLK4; this interaction leads to the TENT5C recruitment into the centrosome.

The protein localises to the nucleus. The protein resides in the cytoplasm. It is found in the cytoskeleton. Its subcellular location is the microtubule organizing center. It localises to the centrosome. The enzyme catalyses RNA(n) + ATP = RNA(n)-3'-adenine ribonucleotide + diphosphate. Functionally, catalyzes the transfer of one adenosine molecule from an ATP to an mRNA poly(A) tail bearing a 3'-OH terminal group and enhances mRNA stability and gene expression. Can also elongate RNA oligos ending with uridine molecule, provided that the sequence is adenosine-rich. Mainly targets mRNAs encoding endoplasmic reticulum-targeted protein. The polypeptide is Terminal nucleotidyltransferase 5C (Rattus norvegicus (Rat)).